A 212-amino-acid chain; its full sequence is Ribonuclease HII (212 aa).

An RNase H type-2 domain is found at 20–209 (TCIVGVDEVG…VHNILYQEAS (190 aa)). The a divalent metal cation site is built by Asp-26, Glu-27, and Asp-117.

It belongs to the RNase HII family. It depends on Mn(2+) as a cofactor. The cofactor is Mg(2+).

The protein resides in the cytoplasm. It catalyses the reaction Endonucleolytic cleavage to 5'-phosphomonoester.. Its function is as follows. Endonuclease that specifically degrades the RNA of RNA-DNA hybrids. The chain is Ribonuclease HII from Cereibacter sphaeroides (strain ATCC 17025 / ATH 2.4.3) (Rhodobacter sphaeroides).